Consider the following 359-residue polypeptide: Histidinol-phosphate aminotransferase (359 aa).

Position 217 is an N6-(pyridoxal phosphate)lysine (Lys-217).

It belongs to the class-II pyridoxal-phosphate-dependent aminotransferase family. Histidinol-phosphate aminotransferase subfamily. As to quaternary structure, homodimer. Pyridoxal 5'-phosphate serves as cofactor.

It catalyses the reaction L-histidinol phosphate + 2-oxoglutarate = 3-(imidazol-4-yl)-2-oxopropyl phosphate + L-glutamate. The protein operates within amino-acid biosynthesis; L-histidine biosynthesis; L-histidine from 5-phospho-alpha-D-ribose 1-diphosphate: step 7/9. The sequence is that of Histidinol-phosphate aminotransferase from Citrobacter koseri (strain ATCC BAA-895 / CDC 4225-83 / SGSC4696).